Reading from the N-terminus, the 667-residue chain is Sorting nexin mvp1 (667 aa).

The disordered stretch occupies residues 221–268 (AGNLHSQQPPKFSVDSSVDDNAITPRKPFSKIPNRLSPSTQPLLSNSR). Residues 224 to 236 (LHSQQPPKFSVDS) show a composition bias toward polar residues. The region spanning 279 to 398 (TSFPASLEMN…RVFFTEPNVF (120 aa)) is the PX domain. Positions 320, 322, and 346 each coordinate a 1,2-diacyl-sn-glycero-3-phospho-(1D-myo-inositol-3-phosphate). The interval 574–594 (ANSDESGRNRTFLNRSSKKRA) is disordered.

The protein belongs to the sorting nexin family. In terms of assembly, homodimer. Forms an autoinhibited tetramer consisting of 2 homodimers that self-interact, wherein the membrane-interacting BAR surfaces are sequestered and the PX lipid-binding sites are occluded. Interacts with Vps1.

Its subcellular location is the cytoplasm. The protein localises to the endosome membrane. Required for vacuolar protein sorting. Component of the retromer-mediated endosome-to-Golgi retrograde pathway. Required for efficient cargo export from the endosome, promoting Vps1-mediated fission of retromer-coated tubules that bud from the endosome. The sequence is that of Sorting nexin mvp1 (mvp1) from Schizosaccharomyces pombe (strain 972 / ATCC 24843) (Fission yeast).